The sequence spans 350 residues: MIKKYSFVNHRIVLYLILGCVVVCGVWYSFDVRQAIDVGAVDLSLPRMSNNLLKEVAVGEGKTTNRLSRLPVDSTVPTVLPQSLAGSIAPPLPLDAYGHLARVSAVRDFFDYFLTAQNDLTPAALDELVTHEIVKQLHGTSAQVEAQDVWTRYCAYFSQLVKLPDLGMVLGDKLDFVAVQRALDQRASLAVRTLGDWSEPFFGAEQQRQRYDLERLKIADDQALTDEQKKKRLVALEQKLPSKVQEERIKIQQQQDAVVKIIQLQKDEVTPDGIRLQVVGLLGPEVAYRVAEMRRQDEIWQEKYKHYAAQRVQIEAQQLEPKEHDVQVENLRQRIFTKPGEALRAASLDQ.

A helical membrane pass occupies residues 12–32 (IVLYLILGCVVVCGVWYSFDV).

The protein belongs to the lipase chaperone family.

The protein resides in the cell inner membrane. Functionally, may be involved in the folding of the extracellular lipase during its passage through the periplasm. The polypeptide is Lipase chaperone (lifO) (Xylella fastidiosa (strain 9a5c)).